A 388-amino-acid polypeptide reads, in one-letter code: MNFRNIDWDSLFSYSTIKIVRIRDKRLGILHFAFLIGIILYIIVGTIFLQKKYLVLESPIGSIRTSLMAPSVKPTDLPYCLKNGTDTSYDGYPNKPCQYWDEYLVLYPPSEESSMFITTRCTQETQSTVNGCNLSEPTCVYNTTSSSDFYIANVENFTILLDHTLSAPSLGIQYNGAQLNGQLLDTDGNPMSLPPPNIVGVKGSPDIMSLQGVLTAAGVESLDSQGLANKSRTIRDDGILILCFITYSNTYTYNTGNYHYTYQFKLVQNTKYKIVEPVFTKDVEDRYIFDRHGVRIIFIQTGQLGQFDFQTMLLTFVSGIGLVTAASLIVDIIATRIMPQRSRYQELKFQDSSINNTQKTPTNDHTPLLKDNEDTINENSYQNNSYEK.

At 1–28 (MNFRNIDWDSLFSYSTIKIVRIRDKRLG) the chain is on the cytoplasmic side. The chain crosses the membrane as a helical span at residues 29 to 49 (ILHFAFLIGIILYIIVGTIFL). Residues 50–312 (QKKYLVLESP…QLGQFDFQTM (263 aa)) are Lumenal-facing. The interval 291 to 304 (RHGVRIIFIQTGQL) is pore-forming motif. The helical transmembrane segment at 313 to 333 (LLTFVSGIGLVTAASLIVDII) threads the bilayer. Residues 334 to 388 (ATRIMPQRSRYQELKFQDSSINNTQKTPTNDHTPLLKDNEDTINENSYQNNSYEK) lie on the Cytoplasmic side of the membrane. The disordered stretch occupies residues 349 to 388 (FQDSSINNTQKTPTNDHTPLLKDNEDTINENSYQNNSYEK). Polar residues-rich tracts occupy residues 350 to 365 (QDSS…TNDH) and 377 to 388 (NENSYQNNSYEK).

Belongs to the P2X receptor family.

It is found in the contractile vacuole membrane. Its function is as follows. P2X receptors are ATP-gated ion channels that play a role in intracellular calcium signaling. Not required for the purinergic response to extracellular nucleotides. Not essential for osmoregulation. Inward currents evoked by intracellular ATP. ATP analog beta, gamma-imido-ATP is a weak partial agonist of p2xE. Exclusively selective for ATP over other nucleotides. Insensitive to copper and P2 receptor antagonists PPADS and suramin but strongly inhibited by sodium ions. More permeable to ammonium than either sodium or potassium ions and less permeable to choline. Permeable to calcium ions, but not chloride. In Dictyostelium discoideum (Social amoeba), this protein is P2X receptor E (p2xE).